Consider the following 172-residue polypeptide: Adenylate kinase isoenzyme 6 (172 aa).

ATP-binding residues include Gly13, Gly15, Lys16, Thr17, and Thr18. The segment at Asn33–Leu56 is NMPbind. Positions Thr108–Asp118 are LID. Residue Arg109 participates in ATP binding.

The protein belongs to the adenylate kinase family. AK6 subfamily. Monomer and homodimer. Interacts with small ribosomal subunit protein uS11. Not a structural component of 43S pre-ribosomes, but transiently interacts with them by binding to uS11. Interacts with COIL (via C-terminus).

It is found in the cytoplasm. The protein localises to the nucleus. It localises to the nucleoplasm. Its subcellular location is the cajal body. It carries out the reaction AMP + ATP = 2 ADP. The catalysed reaction is ATP + H2O = ADP + phosphate + H(+). Its function is as follows. Broad-specificity nucleoside monophosphate (NMP) kinase that catalyzes the reversible transfer of the terminal phosphate group between nucleoside triphosphates and monophosphates. Also has ATPase activity. Involved in the late cytoplasmic maturation steps of the 40S ribosomal particles, specifically 18S rRNA maturation. While NMP activity is not required for ribosome maturation, ATPase activity is. Associates transiently with small ribosomal subunit protein uS11. ATP hydrolysis breaks the interaction with uS11. May temporarily remove uS11 from the ribosome to enable a conformational change of the ribosomal RNA that is needed for the final maturation step of the small ribosomal subunit. Its NMP activity may have a role in nuclear energy homeostasis. May be involved in regulation of Cajal body (CB) formation. This chain is Adenylate kinase isoenzyme 6, found in Mus musculus (Mouse).